The chain runs to 468 residues: tRNA threonylcarbamoyladenosine dehydratase (468 aa).

Transmembrane regions (helical) follow at residues Phe15–Phe35, Asn109–Ala129, and Ile315–Leu335.

This sequence belongs to the HesA/MoeB/ThiF family.

The protein localises to the mitochondrion outer membrane. Catalyzes the ATP-dependent dehydration of threonylcarbamoyladenosine at position 37 (t(6)A37) to form cyclic t(6)A37 (ct(6)A37) in tRNAs that read codons beginning with adenine. In Schizosaccharomyces pombe (strain 972 / ATCC 24843) (Fission yeast), this protein is tRNA threonylcarbamoyladenosine dehydratase (tcd1).